An 82-amino-acid polypeptide reads, in one-letter code: Exodeoxyribonuclease 7 small subunit (82 aa).

It belongs to the XseB family. In terms of assembly, heterooligomer composed of large and small subunits.

It is found in the cytoplasm. It catalyses the reaction Exonucleolytic cleavage in either 5'- to 3'- or 3'- to 5'-direction to yield nucleoside 5'-phosphates.. Functionally, bidirectionally degrades single-stranded DNA into large acid-insoluble oligonucleotides, which are then degraded further into small acid-soluble oligonucleotides. The chain is Exodeoxyribonuclease 7 small subunit from Colwellia psychrerythraea (strain 34H / ATCC BAA-681) (Vibrio psychroerythus).